A 221-amino-acid chain; its full sequence is Probable septum site-determining protein MinC (221 aa).

The protein belongs to the MinC family. Interacts with MinD and FtsZ.

Its function is as follows. Cell division inhibitor that blocks the formation of polar Z ring septums. Rapidly oscillates between the poles of the cell to destabilize FtsZ filaments that have formed before they mature into polar Z rings. Prevents FtsZ polymerization. This Aliivibrio salmonicida (strain LFI1238) (Vibrio salmonicida (strain LFI1238)) protein is Probable septum site-determining protein MinC.